Consider the following 80-residue polypeptide: FXYD domain-containing ion transport regulator 7 (80 aa).

At 1–22 (MATPTQSPTNVPEETDPFFYDY) the chain is on the extracellular side. O-linked (GlcNAc) threonine glycosylation is found at Thr3, Thr5, and Thr9. The chain crosses the membrane as a helical span at residues 23–45 (ATVQTVGMTLATIMFVLGIIIII). The Cytoplasmic segment spans residues 46–80 (SKKVKCRKADSRSESPTCKSCKSELPSSAPGGGGV). A disordered region spans residues 56 to 80 (SRSESPTCKSCKSELPSSAPGGGGV). Ser73 is modified (phosphoserine).

Belongs to the FXYD family. Regulatory subunit of the sodium/potassium-transporting ATPase which is composed of a catalytic alpha subunit, a non-catalytic beta subunit and an additional regulatory subunit. The regulatory subunit, a member of the FXYD protein family, modulates the enzymatic activity in a tissue- and isoform-specific way by changing affinities of the Na+/K+-ATPase toward Na(+), K(+) or ATP. In terms of processing, O-glycosylated; required for stabilization and translocation to the plasma membrane. In terms of tissue distribution, expressed specifically in brain. Expressed in both neurons and glia.

The protein localises to the cell membrane. In terms of biological role, associates with and regulates the activity of the sodium/potassium-transporting ATPase (NKA) which catalyzes the hydrolysis of ATP coupled with the exchange of Na(+) and K(+) ions across the plasma membrane. Reduces the apparent affinity for external K(+), an effect that depends on the presence of external Na(+) and voltage. Increases the apparent affinity for intracellular Na(+). In Rattus norvegicus (Rat), this protein is FXYD domain-containing ion transport regulator 7 (Fxyd7).